We begin with the raw amino-acid sequence, 705 residues long: Ribosomal RNA large subunit methyltransferase K/L (705 aa).

The THUMP domain occupies 43 to 154; the sequence is VVYRCCLWSR…GEKGILGFDL (112 aa).

The protein belongs to the methyltransferase superfamily. RlmKL family.

Its subcellular location is the cytoplasm. It carries out the reaction guanosine(2445) in 23S rRNA + S-adenosyl-L-methionine = N(2)-methylguanosine(2445) in 23S rRNA + S-adenosyl-L-homocysteine + H(+). The catalysed reaction is guanosine(2069) in 23S rRNA + S-adenosyl-L-methionine = N(2)-methylguanosine(2069) in 23S rRNA + S-adenosyl-L-homocysteine + H(+). Its function is as follows. Specifically methylates the guanine in position 2445 (m2G2445) and the guanine in position 2069 (m7G2069) of 23S rRNA. The polypeptide is Ribosomal RNA large subunit methyltransferase K/L (Aliivibrio salmonicida (strain LFI1238) (Vibrio salmonicida (strain LFI1238))).